The chain runs to 237 residues: Ribitol-5-phosphate cytidylyltransferase (237 aa).

Residues 7–10 and 80–86 each bind CTP; these read LAGG and GEDRNET.

Belongs to the IspD/TarI cytidylyltransferase family. TarI subfamily.

It catalyses the reaction D-ribitol 5-phosphate + CTP + H(+) = CDP-L-ribitol + diphosphate. It functions in the pathway cell wall biogenesis; poly(ribitol phosphate) teichoic acid biosynthesis. Its function is as follows. Catalyzes the transfer of the cytidylyl group of CTP to D-ribitol 5-phosphate. This chain is Ribitol-5-phosphate cytidylyltransferase, found in Listeria innocua serovar 6a (strain ATCC BAA-680 / CLIP 11262).